Reading from the N-terminus, the 76-residue chain is Omega-agatoxin-Aa3a (76 aa).

6 disulfides stabilise this stretch: Cys-2–Cys-19, Cys-9–Cys-25, Cys-16–Cys-52, Cys-18–Cys-40, Cys-27–Cys-38, and Cys-59–Cys-67.

It belongs to the neurotoxin 04 (omega-agtx) family. 03 (type II/III omega-agtx) subfamily. As to expression, expressed by the venom gland.

The protein localises to the secreted. In terms of biological role, omega-agatoxin are antagonist of voltage-gated calcium channels. They block insect neuromuscular transmission presynaptically. Potent blocker of N- (Cav2.2/CACNA1B) and L-type (Cav1/CACNA1) calcium channels. This Agelenopsis aperta (North American funnel-web spider) protein is Omega-agatoxin-Aa3a.